The primary structure comprises 241 residues: Large ribosomal subunit protein uL3 (241 aa).

Gln157 is modified (N5-methylglutamine).

Belongs to the universal ribosomal protein uL3 family. Part of the 50S ribosomal subunit. Forms a cluster with proteins L14 and L19. Post-translationally, methylated by PrmB.

Functionally, one of the primary rRNA binding proteins, it binds directly near the 3'-end of the 23S rRNA, where it nucleates assembly of the 50S subunit. This is Large ribosomal subunit protein uL3 from Vesicomyosocius okutanii subsp. Calyptogena okutanii (strain HA).